The primary structure comprises 1204 residues: Cingulin (1204 aa).

A head region spans residues 7–359; that stretch reads MAEPRGPVDH…VMMSSGSSKA (353 aa). Positions 25-48 are disordered; sequence EPVSGAEMGTLRRGGRRPAKDARA. The ZIM signature appears at 48 to 62; that stretch reads ASTYGVAVRVQGIAG. The interval 54-67 is interaction with TJP1/ZO1; the sequence is AVRVQGIAGQPFVV. The segment at 68–269 is disordered; sequence LNSGEKGGDS…SPLSGLSRAR (202 aa). 8 positions are modified to phosphoserine: Ser95, Ser96, Ser98, Ser135, Ser137, Ser140, Ser155, and Ser165. Over residues 126-140 the composition is skewed to polar residues; the sequence is TQWNGKLLRSQSQAS. Residues 166–190 show a composition bias toward polar residues; it reads PGSTIDTAPLSSVDSLINKFDSQLR. Over residues 207 to 231 the composition is skewed to basic and acidic residues; the sequence is EQRKRSKSLDSRLPRDTLEERERQS. Phosphoserine occurs at positions 214, 217, 260, 278, 340, and 353. Residues 360 to 1161 adopt a coiled-coil conformation; that stretch reads VAGQGELTRK…SLEKDSWRKA (802 aa). The residue at position 581 (Lys581) is an N6-acetyllysine. The disordered stretch occupies residues 1156 to 1182; that stretch reads DSWRKASRSAAESTLKHEGLSSDEEFD. The segment at 1162–1204 is tail; it reads SRSAAESTLKHEGLSSDEEFDGVYDPSSIASLLTESNLQTSSC. Residues Ser1176 and Ser1177 each carry the phosphoserine modification.

This sequence belongs to the cingulin family. As to quaternary structure, homodimer. Interacts with TJP1/ZO1 and SPEF1.

The protein resides in the cell junction. The protein localises to the tight junction. Functionally, probably plays a role in the formation and regulation of the tight junction (TJ) paracellular permeability barrier. In Callithrix jacchus (White-tufted-ear marmoset), this protein is Cingulin.